The primary structure comprises 155 residues: UPF0266 membrane protein lin0773 (155 aa).

3 consecutive transmembrane segments (helical) span residues 8 to 28 (IFLF…DAVI), 46 to 66 (RWDG…NTFF), and 70 to 90 (PFST…ICFF).

Belongs to the UPF0266 family.

The protein resides in the cell membrane. The chain is UPF0266 membrane protein lin0773 from Listeria innocua serovar 6a (strain ATCC BAA-680 / CLIP 11262).